A 194-amino-acid chain; its full sequence is Large ribosomal subunit protein eL15 (194 aa).

A disordered region spans residues 158–194 (ANRGLTSAGKKGRGLMYKGKGAEKARPGVRANGKKTK).

The protein belongs to the eukaryotic ribosomal protein eL15 family.

The polypeptide is Large ribosomal subunit protein eL15 (Methanococcus maripaludis (strain DSM 14266 / JCM 13030 / NBRC 101832 / S2 / LL)).